The following is a 147-amino-acid chain: D-aminoacyl-tRNA deacylase (147 aa).

Residues 137 to 138 (GP) carry the Gly-cisPro motif, important for rejection of L-amino acids motif.

Belongs to the DTD family. Homodimer.

It localises to the cytoplasm. It catalyses the reaction glycyl-tRNA(Ala) + H2O = tRNA(Ala) + glycine + H(+). It carries out the reaction a D-aminoacyl-tRNA + H2O = a tRNA + a D-alpha-amino acid + H(+). In terms of biological role, an aminoacyl-tRNA editing enzyme that deacylates mischarged D-aminoacyl-tRNAs. Also deacylates mischarged glycyl-tRNA(Ala), protecting cells against glycine mischarging by AlaRS. Acts via tRNA-based rather than protein-based catalysis; rejects L-amino acids rather than detecting D-amino acids in the active site. By recycling D-aminoacyl-tRNA to D-amino acids and free tRNA molecules, this enzyme counteracts the toxicity associated with the formation of D-aminoacyl-tRNA entities in vivo and helps enforce protein L-homochirality. The protein is D-aminoacyl-tRNA deacylase of Exiguobacterium sp. (strain ATCC BAA-1283 / AT1b).